A 176-amino-acid polypeptide reads, in one-letter code: uncharacterized protein (176 aa).

This sequence belongs to the mimivirus R160 family.

This is an uncharacterized protein from Acanthamoeba polyphaga mimivirus (APMV).